Reading from the N-terminus, the 1012-residue chain is AP-2 complex subunit alpha-1 (1012 aa).

HEAT repeat units follow at residues 254–289 (AMRALQYFPTIEDPSTRKALFEVLQRILMGTDVVKN), 354–391 (DIIKKHQSQIITSLKDPDISIRRRALDLLYGMCDVSNA), 393–430 (DIVEELLQYLSTAEFSMREELSLKAAILAEKFAPDLSW), and 525–565 (PTIP…CIDV). A disordered region spans residues 652–678 (STDPESVARSLSHPNGTLSNIDPQTPS). A compositionally biased stretch (polar residues) spans 663-675 (SHPNGTLSNIDPQ). In terms of domain architecture, GAE spans 742–841 (ALCLKDSGVL…LDFSYKFGAN (100 aa)).

This sequence belongs to the adaptor complexes large subunit family. Adaptor protein complex 2 (AP-2) is a heterotetramer composed of two large adaptins (alpha-type and beta-type subunits), a medium adaptin (mu-type subunit) and a small adaptin (sigma-type subunit). Binds to EPSIN2.

Its subcellular location is the membrane. It is found in the coated pit. Its function is as follows. Subunit of the adaptor protein complex 2 (AP-2). Adaptor protein complexes function in protein transport via transport vesicles in different membrane traffic pathways. Adaptor protein complexes are vesicle coat components and appear to be involved in cargo selection and vesicle formation. AP-2 is involved in clathrin-dependent endocytosis in which cargo proteins are incorporated into vesicles surrounded by clathrin (clathrin-coated vesicles, CCVs) which are destined for fusion with the early endosome. The complex binds polyphosphoinositides. In Arabidopsis thaliana (Mouse-ear cress), this protein is AP-2 complex subunit alpha-1 (ALPHA-ADR).